The primary structure comprises 506 residues: Maturase K (506 aa).

The protein belongs to the intron maturase 2 family. MatK subfamily.

The protein localises to the plastid. It is found in the chloroplast. Functionally, usually encoded in the trnK tRNA gene intron. Probably assists in splicing its own and other chloroplast group II introns. The polypeptide is Maturase K (Trifolium resupinatum (Persian clover)).